The sequence spans 37 residues: Large ribosomal subunit protein bL36c (37 aa).

This sequence belongs to the bacterial ribosomal protein bL36 family.

It is found in the plastid. Its subcellular location is the chloroplast. This is Large ribosomal subunit protein bL36c from Populus alba (White poplar).